The sequence spans 400 residues: Large envelope protein (400 aa).

M1 is modified (N-acetylmethionine). G2 carries N-myristoyl glycine; by host lipidation. The segment at 2–119 is pre-S1; it reads GGWSSKPRKG…PPLRDTHPQA (118 aa). The interval 2–174 is pre-S; sequence GGWSSKPRKG…LSKTGDPVPN (173 aa). The Virion surface; in external conformation portion of the chain corresponds to 2–181; sequence GGWSSKPRKG…VPNMENISSG (180 aa). Topologically, residues 2–253 are intravirion; in internal conformation; sequence GGWSSKPRKG…PGYRWMCLRR (252 aa). An N-linked (GlcNAc...) asparagine glycan is attached at W4. Disordered regions lie at residues 29–50 and 85–118; these read QLDP…PHKD and LTTV…THPQ. Residues 96 to 106 are compositionally biased toward polar residues; it reads STSRQSGRQPT. Positions 120 to 174 are pre-S2; sequence MQWNSTTFHQTLQDPRVRALYFPAGGSSSGTVSPAQNTVSAISSTLSKTGDPVPN. Residues 182-202 traverse the membrane as a helical segment; that stretch reads LLGPLLVLQAGFFLLTKILTI. At 203–253 the chain is on the intravirion; in external conformation side; that stretch reads PQSLDSWWTSLNFLGQTPVCLGQNSQSQISSHSLTCCPPICPGYRWMCLRR. Residues 254–274 traverse the membrane as a helical segment; that stretch reads FIIFLCILLLCLIFLLVLLDC. At 275–348 the chain is on the virion surface side; the sequence is QGMLPVCPLI…WASVRFSWLS (74 aa). N-linked (GlcNAc...) asparagine; by host glycosylation is present at N320. Residues 349-369 form a helical membrane-spanning segment; the sequence is LLVPFVQWFVGLSPTVWLSVI. The Intravirion segment spans residues 370–375; that stretch reads WMMWFW. A helical membrane pass occupies residues 376–398; sequence GPSLCNILSPFMPLLPIFFCLWV. Topologically, residues 399 to 400 are virion surface; that stretch reads YI.

It belongs to the orthohepadnavirus major surface antigen family. As to quaternary structure, interacts (via its myristoylated pre-S1 region) with the host SLC10A1/NTCP; this interaction is essential for viral entry. In its internal form (Li-HBsAg), interacts with the capsid protein and with the isoform S. Interacts with host chaperone CANX. In terms of assembly, associates with host chaperone CANX through its pre-S2 N glycan; this association may be essential for isoform M proper secretion. As to quaternary structure, interacts with isoform L. Interacts with the antigens of satellite virus HDV (HDVAgs); this interaction is required for encapsidation of HDV genomic RNA. Post-translationally, isoform M is N-terminally acetylated by host at a ratio of 90%, and N-glycosylated by host at the pre-S2 region. Myristoylated; this modification is essential for its interaction with the host protein SLC10A1/NTCP.

The protein localises to the virion membrane. Its function is as follows. The large envelope protein exists in two topological conformations, one which is termed 'external' or Le-HBsAg and the other 'internal' or Li-HBsAg. In its external conformation the protein attaches the virus to cell receptors and thereby initiating infection. This interaction determines the species specificity and liver tropism. This attachment induces virion internalization predominantly through caveolin-mediated endocytosis. The large envelope protein also assures fusion between virion membrane and endosomal membrane. In its internal conformation the protein plays a role in virion morphogenesis and mediates the contact with the nucleocapsid like a matrix protein. The middle envelope protein plays an important role in the budding of the virion. It is involved in the induction of budding in a nucleocapsid independent way. In this process the majority of envelope proteins bud to form subviral lipoprotein particles of 22 nm of diameter that do not contain a nucleocapsid. In Homo sapiens (Human), this protein is Large envelope protein.